A 99-amino-acid chain; its full sequence is NADH-quinone oxidoreductase subunit K (99 aa).

3 helical membrane-spanning segments follow: residues 2–22, 28–48, and 60–80; these read PVEYYLWLAAILFGIGLLGVL, LILMMSVELMLNAANLTFLAF, and IAFFVIAVAAAEAAVGLAVVI.

Belongs to the complex I subunit 4L family. As to quaternary structure, NDH-1 is composed of 14 different subunits. Subunits NuoA, H, J, K, L, M, N constitute the membrane sector of the complex.

Its subcellular location is the cell inner membrane. The catalysed reaction is a quinone + NADH + 5 H(+)(in) = a quinol + NAD(+) + 4 H(+)(out). Functionally, NDH-1 shuttles electrons from NADH, via FMN and iron-sulfur (Fe-S) centers, to quinones in the respiratory chain. The immediate electron acceptor for the enzyme in this species is believed to be ubiquinone. Couples the redox reaction to proton translocation (for every two electrons transferred, four hydrogen ions are translocated across the cytoplasmic membrane), and thus conserves the redox energy in a proton gradient. The sequence is that of NADH-quinone oxidoreductase subunit K from Anaeromyxobacter dehalogenans (strain 2CP-1 / ATCC BAA-258).